Reading from the N-terminus, the 131-residue chain is D-ribose pyranase (131 aa).

Catalysis depends on His20, which acts as the Proton donor. Substrate is bound by residues Asp28, His98, and 120 to 122 (FSN).

The protein belongs to the RbsD / FucU family. RbsD subfamily. Homodecamer.

It localises to the cytoplasm. The enzyme catalyses beta-D-ribopyranose = beta-D-ribofuranose. Its pathway is carbohydrate metabolism; D-ribose degradation; D-ribose 5-phosphate from beta-D-ribopyranose: step 1/2. Catalyzes the interconversion of beta-pyran and beta-furan forms of D-ribose. The sequence is that of D-ribose pyranase from Lactobacillus acidophilus (strain ATCC 700396 / NCK56 / N2 / NCFM).